A 608-amino-acid chain; its full sequence is Phosphomethylpyrimidine synthase (608 aa).

Substrate-binding positions include Asn216, Met245, Tyr274, His310, 330–332 (SRG), 371–374 (DGLR), and Glu410. Position 414 (His414) interacts with Zn(2+). Tyr437 provides a ligand contact to substrate. Residue His478 coordinates Zn(2+). Residues Cys558, Cys561, and Cys566 each contribute to the [4Fe-4S] cluster site.

Belongs to the ThiC family. Homodimer. [4Fe-4S] cluster is required as a cofactor.

The catalysed reaction is 5-amino-1-(5-phospho-beta-D-ribosyl)imidazole + S-adenosyl-L-methionine = 4-amino-2-methyl-5-(phosphooxymethyl)pyrimidine + CO + 5'-deoxyadenosine + formate + L-methionine + 3 H(+). It functions in the pathway cofactor biosynthesis; thiamine diphosphate biosynthesis. In terms of biological role, catalyzes the synthesis of the hydroxymethylpyrimidine phosphate (HMP-P) moiety of thiamine from aminoimidazole ribotide (AIR) in a radical S-adenosyl-L-methionine (SAM)-dependent reaction. The chain is Phosphomethylpyrimidine synthase from Ruegeria sp. (strain TM1040) (Silicibacter sp.).